A 1026-amino-acid chain; its full sequence is Beta-galactosidase (1026 aa).

Substrate is bound by residues N104 and D203. A Na(+)-binding site is contributed by D203. Positions 418, 420, and 463 each coordinate Mg(2+). Residues E463 and 539-542 (EYAH) each bind substrate. E463 acts as the Proton donor in catalysis. The Nucleophile role is filled by E539. Mg(2+) is bound at residue N599. Na(+)-binding residues include F603 and N606. N606 and W1002 together coordinate substrate.

The protein belongs to the glycosyl hydrolase 2 family. Homotetramer. Mg(2+) is required as a cofactor. Na(+) serves as cofactor.

The enzyme catalyses Hydrolysis of terminal non-reducing beta-D-galactose residues in beta-D-galactosides.. The protein is Beta-galactosidase of Erwinia tasmaniensis (strain DSM 17950 / CFBP 7177 / CIP 109463 / NCPPB 4357 / Et1/99).